Reading from the N-terminus, the 314-residue chain is Olfactory receptor 1E5 (314 aa).

The Extracellular portion of the chain corresponds to 1-25 (MMGQNQTSISDFLLLGLPIQPEQQN). The N-linked (GlcNAc...) asparagine glycan is linked to asparagine 5. Residues 26-49 (LCYALFLAMYLTTLLGNLLIIVLI) traverse the membrane as a helical segment. Over 50–57 (RLDSHLHT) the chain is Cytoplasmic. The chain crosses the membrane as a helical span at residues 58-79 (PMYLFLSNLSFSDLCFSSVTIP). Over 80–100 (KLLQNMQNQDPSIPYADCLTQ) the chain is Extracellular. Cysteine 97 and cysteine 189 form a disulfide bridge. The chain crosses the membrane as a helical span at residues 101–120 (MYFFLLFGDLESFLLVAMAY). Over 121–139 (DRYVAICFPLHYTAIMSPM) the chain is Cytoplasmic. Residues 140–158 (LCLSLVALSWVLTTFHAML) traverse the membrane as a helical segment. At 159–196 (HTLLMARLCFCADNVIPHFFCDMSALLKLACSDTRVNE) the chain is on the extracellular side. Residues 197–219 (WVIFIMGGLIVVIPFLLILGSYA) traverse the membrane as a helical segment. Residues 220–236 (RIVSSILKVPSSKGICK) lie on the Cytoplasmic side of the membrane. A helical transmembrane segment spans residues 237–260 (AFSTCGSHLSVVSLFYGTIIGLYL). At 261-272 (CPSANSSTLKET) the chain is on the extracellular side. N-linked (GlcNAc...) asparagine glycosylation is present at asparagine 265. A helical transmembrane segment spans residues 273–292 (VMAMMYTVVTPMLNPFIYSL). The Cytoplasmic portion of the chain corresponds to 293-314 (RNRDMKGALERVIXKRKNPFLL).

It belongs to the G-protein coupled receptor 1 family.

It localises to the cell membrane. In terms of biological role, odorant receptor. This Pan troglodytes (Chimpanzee) protein is Olfactory receptor 1E5 (OR1E5).